The chain runs to 253 residues: 3-deoxy-manno-octulosonate cytidylyltransferase (253 aa).

This sequence belongs to the KdsB family.

The protein resides in the cytoplasm. It catalyses the reaction 3-deoxy-alpha-D-manno-oct-2-ulosonate + CTP = CMP-3-deoxy-beta-D-manno-octulosonate + diphosphate. The protein operates within nucleotide-sugar biosynthesis; CMP-3-deoxy-D-manno-octulosonate biosynthesis; CMP-3-deoxy-D-manno-octulosonate from 3-deoxy-D-manno-octulosonate and CTP: step 1/1. Its pathway is bacterial outer membrane biogenesis; lipopolysaccharide biosynthesis. Activates KDO (a required 8-carbon sugar) for incorporation into bacterial lipopolysaccharide in Gram-negative bacteria. In Acidithiobacillus ferrooxidans (strain ATCC 23270 / DSM 14882 / CIP 104768 / NCIMB 8455) (Ferrobacillus ferrooxidans (strain ATCC 23270)), this protein is 3-deoxy-manno-octulosonate cytidylyltransferase.